The following is a 385-amino-acid chain: 4-hydroxy-3-methylbut-2-en-1-yl diphosphate synthase (flavodoxin) (385 aa).

The [4Fe-4S] cluster site is built by C280, C283, C315, and E322.

It belongs to the IspG family. [4Fe-4S] cluster serves as cofactor.

It carries out the reaction (2E)-4-hydroxy-3-methylbut-2-enyl diphosphate + oxidized [flavodoxin] + H2O + 2 H(+) = 2-C-methyl-D-erythritol 2,4-cyclic diphosphate + reduced [flavodoxin]. It functions in the pathway isoprenoid biosynthesis; isopentenyl diphosphate biosynthesis via DXP pathway; isopentenyl diphosphate from 1-deoxy-D-xylulose 5-phosphate: step 5/6. Converts 2C-methyl-D-erythritol 2,4-cyclodiphosphate (ME-2,4cPP) into 1-hydroxy-2-methyl-2-(E)-butenyl 4-diphosphate. The chain is 4-hydroxy-3-methylbut-2-en-1-yl diphosphate synthase (flavodoxin) from Streptomyces griseus subsp. griseus (strain JCM 4626 / CBS 651.72 / NBRC 13350 / KCC S-0626 / ISP 5235).